The sequence spans 156 residues: Acanthoscurrin-1 (156 aa).

Positions 1 to 23 (MAFRMKLVVCIVLLSTLAVMSSA) are cleaved as a signal peptide. Lysine amide is present on Lys155.

Expressed in hemocytes and secreted into the plasma following bacterial immune challenge.

The protein resides in the secreted. In terms of biological role, antimicrobial protein. Strong activity against the Gram-negative bacterium E.coli SBS363 and yeast C.albicans. No detectable activity against the Gram-positive bacterium M.luteus. The polypeptide is Acanthoscurrin-1 (Acanthoscurria gomesiana (Tarantula spider)).